Here is a 284-residue protein sequence, read N- to C-terminus: Lipoyl synthase (284 aa).

Residues Cys-38, Cys-43, Cys-49, Cys-64, Cys-68, Cys-71, and Ser-277 each coordinate [4Fe-4S] cluster. The region spanning 50–266 (WSRGTATFLL…RDEALGMGFS (217 aa)) is the Radical SAM core domain.

Belongs to the radical SAM superfamily. Lipoyl synthase family. [4Fe-4S] cluster is required as a cofactor.

It is found in the cytoplasm. The enzyme catalyses [[Fe-S] cluster scaffold protein carrying a second [4Fe-4S](2+) cluster] + N(6)-octanoyl-L-lysyl-[protein] + 2 oxidized [2Fe-2S]-[ferredoxin] + 2 S-adenosyl-L-methionine + 4 H(+) = [[Fe-S] cluster scaffold protein] + N(6)-[(R)-dihydrolipoyl]-L-lysyl-[protein] + 4 Fe(3+) + 2 hydrogen sulfide + 2 5'-deoxyadenosine + 2 L-methionine + 2 reduced [2Fe-2S]-[ferredoxin]. Its pathway is protein modification; protein lipoylation via endogenous pathway; protein N(6)-(lipoyl)lysine from octanoyl-[acyl-carrier-protein]: step 2/2. In terms of biological role, catalyzes the radical-mediated insertion of two sulfur atoms into the C-6 and C-8 positions of the octanoyl moiety bound to the lipoyl domains of lipoate-dependent enzymes, thereby converting the octanoylated domains into lipoylated derivatives. This is Lipoyl synthase from Chlorobium phaeovibrioides (strain DSM 265 / 1930) (Prosthecochloris vibrioformis (strain DSM 265)).